Consider the following 378-residue polypeptide: Ferredoxin--NADP reductase, root isozyme 1, chloroplastic (378 aa).

The N-terminal 65 residues, 1–65 (MALSTTPSQM…KRSTICMSLQ (65 aa)), are a transit peptide targeting the chloroplast. Positions 93-221 (KEPYTATIVS…TGPSGKVMLL (129 aa)) constitute an FAD-binding FR-type domain. Cysteines 196 and 201 form a disulfide. S197 is subject to Phosphoserine. Phosphothreonine is present on T229. NADP(+) is bound at residue 231 to 249 (IMIATGTGVAPYRGYLRRM). Positions 349-373 (LKRVAEERGESWEQKLTQLRKNKQW) form a coiled coil.

This sequence belongs to the ferredoxin--NADP reductase type 1 family. Requires FAD as cofactor. In terms of tissue distribution, expressed in shoots and roots. Less abundant in roots than RFNR2.

The protein localises to the plastid. It localises to the chloroplast. It carries out the reaction 2 reduced [2Fe-2S]-[ferredoxin] + NADP(+) + H(+) = 2 oxidized [2Fe-2S]-[ferredoxin] + NADPH. Maintains the supply of reduced ferredoxin under non-photosynthetic conditions. In Arabidopsis thaliana (Mouse-ear cress), this protein is Ferredoxin--NADP reductase, root isozyme 1, chloroplastic (RFNR1).